A 319-amino-acid chain; its full sequence is Histidinol-phosphate aminotransferase 1 (319 aa).

N6-(pyridoxal phosphate)lysine is present on Lys182.

The protein belongs to the class-II pyridoxal-phosphate-dependent aminotransferase family. Histidinol-phosphate aminotransferase subfamily. It depends on pyridoxal 5'-phosphate as a cofactor.

The catalysed reaction is L-histidinol phosphate + 2-oxoglutarate = 3-(imidazol-4-yl)-2-oxopropyl phosphate + L-glutamate. The protein operates within amino-acid biosynthesis; L-histidine biosynthesis; L-histidine from 5-phospho-alpha-D-ribose 1-diphosphate: step 7/9. In Archaeoglobus fulgidus (strain ATCC 49558 / DSM 4304 / JCM 9628 / NBRC 100126 / VC-16), this protein is Histidinol-phosphate aminotransferase 1 (hisC1).